A 399-amino-acid chain; its full sequence is S-adenosylmethionine synthase (399 aa).

ATP is bound at residue His-15. A Mg(2+)-binding site is contributed by Asp-17. A K(+)-binding site is contributed by Glu-43. Residues Glu-56 and Gln-99 each coordinate L-methionine. Residues 99–109 (QSADIAQGVDN) are flexible loop. ATP is bound by residues 174-176 (DGK), 244-245 (RF), Asp-253, 259-260 (RK), Ala-276, and Lys-280. Asp-253 is an L-methionine binding site. Lys-284 serves as a coordination point for L-methionine.

Belongs to the AdoMet synthase family. Homotetramer; dimer of dimers. Requires Mg(2+) as cofactor. K(+) serves as cofactor.

The protein localises to the cytoplasm. The enzyme catalyses L-methionine + ATP + H2O = S-adenosyl-L-methionine + phosphate + diphosphate. The protein operates within amino-acid biosynthesis; S-adenosyl-L-methionine biosynthesis; S-adenosyl-L-methionine from L-methionine: step 1/1. Catalyzes the formation of S-adenosylmethionine (AdoMet) from methionine and ATP. The overall synthetic reaction is composed of two sequential steps, AdoMet formation and the subsequent tripolyphosphate hydrolysis which occurs prior to release of AdoMet from the enzyme. The protein is S-adenosylmethionine synthase of Salinispora arenicola (strain CNS-205).